We begin with the raw amino-acid sequence, 121 residues long: MRHYEIILMIHPDQSEQVPAMLERYKGMITAGGGKVHRVEDWGRRQLVYMINKLAKAHYLCVNIEADQAVMAELEHAFKFNDAVLRHLTVLKKKADTGPSSMMKTVEREDARKTQQAEYQA.

Positions 96–121 are disordered; that stretch reads DTGPSSMMKTVEREDARKTQQAEYQA. Basic and acidic residues predominate over residues 105-115; sequence TVEREDARKTQ.

This sequence belongs to the bacterial ribosomal protein bS6 family.

Functionally, binds together with bS18 to 16S ribosomal RNA. In Albidiferax ferrireducens (strain ATCC BAA-621 / DSM 15236 / T118) (Rhodoferax ferrireducens), this protein is Small ribosomal subunit protein bS6.